We begin with the raw amino-acid sequence, 3491 residues long: Genome polyprotein (3491 aa).

One can recognise a Fe2OG dioxygenase domain in the interval 183-277 (KYNTALVQVY…RISITFRNQI (95 aa)). Residues H201, D203, and H259 each contribute to the Fe cation site. R268 contacts 2-oxoglutarate. Positions 559–588 (DSASDNDVETMKKSEKRRKRRKRNPPPVRQ) are disordered. Residues 572–582 (SEKRRKRRKRN) are compositionally biased toward basic residues. One can recognise a Peptidase S30 domain in the interval 589–745 (VITRAPVSNI…DCLADDYLQY (157 aa)). Active-site for P1 proteinase activity residues include H640, D651, and S692. In terms of domain architecture, Peptidase C6 spans 948–1070 (VHVPLEGLCF…RNGCQEYRVG (123 aa)). Active-site for helper component proteinase activity residues include C956 and H1029. Residues 1540–1692 (TLTSSVKREF…TMHPVEVVNM (153 aa)) enclose the Helicase ATP-binding domain. Residue 1553–1560 (GFVGSGKS) participates in ATP binding. Positions 1642–1645 (DESH) match the DEAH box motif. Residues 1696-1869 (SFEDFAIGQR…NVPPIFDNVD (174 aa)) enclose the Helicase C-terminal domain. Position 2238 is an O-(5'-phospho-RNA)-tyrosine (Y2238). In terms of domain architecture, Peptidase C4 spans 2354–2570 (GRSTIKSGNN…LDVGSNNAIR (217 aa)). Residues H2400, D2435, and C2504 each act as for nuclear inclusion protein A activity in the active site. Positions 2850 to 2974 (FVYGTGDGSQ…AIHPDRESIL (125 aa)) constitute a RdRp catalytic domain. Disordered regions lie at residues 3200 to 3279 (MPQA…RKGL) and 3471 to 3491 (RHTT…AMMA). Over residues 3236 to 3248 (RLSPERIVRHDDD) the composition is skewed to basic and acidic residues. T3473 carries the phosphothreonine modification.

This sequence belongs to the potyviridae genome polyprotein family. Fe(2+) is required as a cofactor. Post-translationally, VPg is uridylylated by the polymerase and is covalently attached to the 5'-end of the genomic RNA. This uridylylated form acts as a nucleotide-peptide primer for the polymerase. Genome polyprotein of potyviruses undergoes post-translational proteolytic processing by the main proteinase NIa-pro resulting in the production of at least ten individual proteins. The P1 proteinase and the HC-pro cleave only their respective C-termini autocatalytically. 6K1 is essential for proper proteolytic separation of P3 from CI.

It localises to the host cytoplasmic vesicle. It is found in the virion. It catalyses the reaction RNA(n) + a ribonucleoside 5'-triphosphate = RNA(n+1) + diphosphate. The enzyme catalyses Hydrolyzes glutaminyl bonds, and activity is further restricted by preferences for the amino acids in P6 - P1' that vary with the species of potyvirus, e.g. Glu-Xaa-Xaa-Tyr-Xaa-Gln-|-(Ser or Gly) for the enzyme from tobacco etch virus. The natural substrate is the viral polyprotein, but other proteins and oligopeptides containing the appropriate consensus sequence are also cleaved.. It carries out the reaction Hydrolyzes a Gly-|-Gly bond at its own C-terminus, commonly in the sequence -Tyr-Xaa-Val-Gly-|-Gly, in the processing of the potyviral polyprotein.. In terms of biological role, required for aphid transmission and also has proteolytic activity. Only cleaves a Gly-Gly dipeptide at its own C-terminus. Interacts with virions and aphid stylets. Acts as a suppressor of RNA-mediated gene silencing, also known as post-transcriptional gene silencing (PTGS), a mechanism of plant viral defense that limits the accumulation of viral RNAs. May have RNA-binding activity. Functionally, has helicase activity. It may be involved in replication. Its function is as follows. Indispensable for virus replication. Reduces the abundance of host transcripts related to jasmonic acid biosynthesis therefore altering the host defenses. In order to increase its own stability, decreases host protein degradation pathways. Indispensable for virus replication. In terms of biological role, mediates the cap-independent, EIF4E-dependent translation of viral genomic RNAs. Binds to the cap-binding site of host EIF4E and thus interferes with the host EIF4E-dependent mRNA export and translation. VPg-RNA directly binds EIF4E and is a template for transcription. Also forms trimeric complexes with EIF4E-EIF4G, which are templates for translation. Functionally, has RNA-binding and proteolytic activities. Its function is as follows. An RNA-dependent RNA polymerase that plays an essential role in the virus replication. Involved in aphid transmission, cell-to-cell and systemis movement, encapsidation of the viral RNA and in the regulation of viral RNA amplification. In Blackberry virus Y (isolate Blackberry plant/USA:Arkansas/C3ARK/2005) (BVY), this protein is Genome polyprotein.